An 873-amino-acid polypeptide reads, in one-letter code: E3 ubiquitin-protein ligase UPL5 (873 aa).

A compositionally biased stretch (polar residues) spans 1 to 19 (MTLSRSSADDSTNNANRSY). Disordered regions lie at residues 1 to 37 (MTLS…DSSD) and 70 to 90 (RSGE…SNRP). The Ubiquitin-like domain occupies 95 to 171 (LQIFVRMMSG…LQLVARMQST (77 aa)). Residues 272–296 (CLPIVLEFCKLLRKVCPDQKLYVTC) enclose the C-type lectin domain. The HECT domain maps to 532-873 (SPEALHGGLF…DHVSSSFGKW (342 aa)). Cysteine 839 (glycyl thioester intermediate) is an active-site residue.

The protein belongs to the UPL family. As to quaternary structure, interacts with WRKY53.

It is found in the cytoplasm. The enzyme catalyses S-ubiquitinyl-[E2 ubiquitin-conjugating enzyme]-L-cysteine + [acceptor protein]-L-lysine = [E2 ubiquitin-conjugating enzyme]-L-cysteine + N(6)-ubiquitinyl-[acceptor protein]-L-lysine.. The protein operates within protein modification; protein ubiquitination. Its function is as follows. E3 ubiquitin protein ligase that regulates leaf senescence through ubiquitination and subsequent degradation of WRKY53. This is E3 ubiquitin-protein ligase UPL5 (UPL5) from Arabidopsis thaliana (Mouse-ear cress).